The sequence spans 216 residues: MTIRNYNYHMTHFVISAPDIRHLPRDEGIEVAFAGRSNAGKSSALNTLTNQKGLARTSKTPGRTQLINLFEVVDGVRLVDLPGYGYAEVPEEMKLKWQRALGEYLQKRNCLKGLVVLMDIRHPLKDLDQQMITWAVAVGTPVLLLLTKADKLASGACKAQLNLVREAIIPFMGDIQVEAFSSLKKIGVDKLREKLDTWFSEIPPEVMAEEFDGEGE.

The EngB-type G domain occupies 27–201 (EGIEVAFAGR…REKLDTWFSE (175 aa)). GTP contacts are provided by residues 35–42 (GRSNAGKS), 62–66 (GRTQL), 80–83 (DLPG), 147–150 (TKAD), and 180–182 (FSS). The Mg(2+) site is built by S42 and T64.

Belongs to the TRAFAC class TrmE-Era-EngA-EngB-Septin-like GTPase superfamily. EngB GTPase family. The cofactor is Mg(2+).

Necessary for normal cell division and for the maintenance of normal septation. The protein is Probable GTP-binding protein EngB of Yersinia pestis bv. Antiqua (strain Angola).